Reading from the N-terminus, the 187-residue chain is Large ribosomal subunit protein uL22 (187 aa).

Basic and acidic residues-rich tracts occupy residues 158–168 and 178–187; these read TKATDESEQAK and RQKEKMMRNE. A disordered region spans residues 158–187; sequence TKATDESEQAKKKLSKKKLQRQKEKMMRNE.

Belongs to the universal ribosomal protein uL22 family.

The chain is Large ribosomal subunit protein uL22 (RpL17) from Anopheles gambiae (African malaria mosquito).